Here is a 78-residue protein sequence, read N- to C-terminus: Conotoxin TsMSGL-11 (78 aa).

The N-terminal stretch at 1–24 (MSGLGIMVLTLLLLVFMATSHQDA) is a signal peptide. A propeptide spanning residues 25 to 44 (GEKQATQRDAINVRRRRSIT) is cleaved from the precursor. 3 disulfide bridges follow: cysteine 51–cysteine 63, cysteine 55–cysteine 72, and cysteine 62–cysteine 76. Phenylalanine 77 is modified (phenylalanine amide).

It belongs to the conotoxin O3 superfamily. As to expression, expressed by the venom duct.

It is found in the secreted. This is Conotoxin TsMSGL-11 from Conus tessulatus (Tessellate cone).